A 388-amino-acid polypeptide reads, in one-letter code: Diacylglycerol O-acyltransferase 2 (388 aa).

Residues 1-69 lie on the Cytoplasmic side of the membrane; the sequence is MKTLIAAYSG…NRSKVEKQLQ (69 aa). Residues 70 to 88 form a helical membrane-spanning segment; sequence VISVLQWVLSFLVLGVACS. At 89–92 the chain is on the lumenal side; the sequence is VILM. Residues 93–112 traverse the membrane as a helical segment; it reads YTFCTDCWLIAVLYFTWLAF. At 113-388 the chain is on the cytoplasmic side; it reads DWNTPKKGGR…LPETEVLEVN (276 aa).

This sequence belongs to the diacylglycerol acyltransferase family. In terms of assembly, forms multimeric complexes consisting of several DGAT2 subunits. Interacts with SLC27A1 and this interaction is enhanced in the presence of ZFYVE1. As to expression, predominantly expressed in liver. Also expressed in testis.

It is found in the endoplasmic reticulum membrane. It localises to the lipid droplet. The protein resides in the cytoplasm. Its subcellular location is the perinuclear region. The catalysed reaction is an acyl-CoA + a 1,2-diacyl-sn-glycerol = a triacyl-sn-glycerol + CoA. It carries out the reaction all-trans-retinol + an acyl-CoA = an all-trans-retinyl ester + CoA. The enzyme catalyses 1,2-di-(9Z-octadecenoyl)-sn-glycerol + hexadecanoyl-CoA = 1,2-di-(9Z)-octadecenoyl-3-hexadecanoyl-sn-glycerol + CoA. It catalyses the reaction 1,2-di-(9Z-octadecenoyl)-sn-glycerol + (9Z)-octadecenoyl-CoA = 1,2,3-tri-(9Z-octadecenoyl)-glycerol + CoA. The catalysed reaction is 1,3-di-(9Z-octadecenoyl)-glycerol + (9Z)-octadecenoyl-CoA = 1,2,3-tri-(9Z-octadecenoyl)-glycerol + CoA. It carries out the reaction 2,3-di-(9Z)-octadecenoyl-sn-glycerol + (9Z)-octadecenoyl-CoA = 1,2,3-tri-(9Z-octadecenoyl)-glycerol + CoA. The enzyme catalyses 2-(9Z-octadecenoyl)-glycerol + hexadecanoyl-CoA = 1-hexadecanoyl-2-(9Z-octadecenoyl)-sn-glycerol + CoA. It catalyses the reaction 2-(9Z-octadecenoyl)-glycerol + (9Z)-octadecenoyl-CoA = 1,2-di-(9Z-octadecenoyl)-sn-glycerol + CoA. The catalysed reaction is all-trans-retinol + hexadecanoyl-CoA = all-trans-retinyl hexadecanoate + CoA. It carries out the reaction 1-O-(9Z-octadecenyl)-glycerol + (9Z)-octadecenoyl-CoA = 1-O-(9Z-octadecyl)-3-(9Z-octadecenoyl)-glycerol + CoA. The enzyme catalyses 1-(9Z-octadecenoyl)-glycerol + (9Z)-octadecenoyl-CoA = 1,2-di-(9Z-octadecenoyl)-glycerol + CoA. It participates in glycerolipid metabolism; triacylglycerol biosynthesis. Inhibited by niacin. Essential acyltransferase that catalyzes the terminal and only committed step in triacylglycerol synthesis by using diacylglycerol and fatty acyl CoA as substrates. Required for synthesis and storage of intracellular triglycerides. Probably plays a central role in cytosolic lipid accumulation. In liver, is primarily responsible for incorporating endogenously synthesized fatty acids into triglycerides. Also functions as an acyl-CoA retinol acyltransferase (ARAT). Also able to use 1-monoalkylglycerol (1-MAkG) as an acyl acceptor for the synthesis of monoalkyl-monoacylglycerol (MAMAG). This Mus musculus (Mouse) protein is Diacylglycerol O-acyltransferase 2.